Here is a 129-residue protein sequence, read N- to C-terminus: Glycine cleavage system H protein (129 aa).

Positions 24 to 106 constitute a Lipoyl-binding domain; sequence VFTVGISEHA…YGDGWLFKIK (83 aa). At K65 the chain carries N6-lipoyllysine.

The protein belongs to the GcvH family. In terms of assembly, the glycine cleavage system is composed of four proteins: P, T, L and H. (R)-lipoate is required as a cofactor.

The glycine cleavage system catalyzes the degradation of glycine. The H protein shuttles the methylamine group of glycine from the P protein to the T protein. The protein is Glycine cleavage system H protein of Alteromonas mediterranea (strain DSM 17117 / CIP 110805 / LMG 28347 / Deep ecotype).